The primary structure comprises 482 residues: Replication factor C large subunit (482 aa).

An ATP-binding site is contributed by 46-53 (GPPGSGKT). The disordered stretch occupies residues 420 to 482 (EKETPKKKKK…KKQATLDSFF (63 aa)). Basic and acidic residues predominate over residues 442–476 (KISEPPKEPLKEVIEETVEKTDKKEKEKKDPKKQA).

Belongs to the activator 1 small subunits family. RfcL subfamily. As to quaternary structure, heteromultimer composed of small subunits (RfcS) and large subunits (RfcL).

Its function is as follows. Part of the RFC clamp loader complex which loads the PCNA sliding clamp onto DNA. The protein is Replication factor C large subunit of Methanococcus maripaludis (strain C7 / ATCC BAA-1331).